The sequence spans 207 residues: Holliday junction branch migration complex subunit RuvA (207 aa).

The interval 1 to 63 (MISSLRGTVL…EDSLQLFGFS (63 aa)) is domain I. Positions 64–142 (GLEQLQVFEL…ACRRPSAPSA (79 aa)) are domain II. Positions 142–146 (ARRPS) are flexible linker. The domain III stretch occupies residues 147-207 (APSSVSDSVL…RLGPANQAAR (61 aa)).

This sequence belongs to the RuvA family. In terms of assembly, homotetramer. Forms an RuvA(8)-RuvB(12)-Holliday junction (HJ) complex. HJ DNA is sandwiched between 2 RuvA tetramers; dsDNA enters through RuvA and exits via RuvB. An RuvB hexamer assembles on each DNA strand where it exits the tetramer. Each RuvB hexamer is contacted by two RuvA subunits (via domain III) on 2 adjacent RuvB subunits; this complex drives branch migration. In the full resolvosome a probable DNA-RuvA(4)-RuvB(12)-RuvC(2) complex forms which resolves the HJ.

The protein localises to the cytoplasm. The RuvA-RuvB-RuvC complex processes Holliday junction (HJ) DNA during genetic recombination and DNA repair, while the RuvA-RuvB complex plays an important role in the rescue of blocked DNA replication forks via replication fork reversal (RFR). RuvA specifically binds to HJ cruciform DNA, conferring on it an open structure. The RuvB hexamer acts as an ATP-dependent pump, pulling dsDNA into and through the RuvAB complex. HJ branch migration allows RuvC to scan DNA until it finds its consensus sequence, where it cleaves and resolves the cruciform DNA. The sequence is that of Holliday junction branch migration complex subunit RuvA from Leifsonia xyli subsp. xyli (strain CTCB07).